The chain runs to 137 residues: Putative nucleoside diphosphate kinase (137 aa).

ATP-binding residues include Phe45, Arg73, Thr79, Arg90, and Asn100. Catalysis depends on His103, which acts as the Pros-phosphohistidine intermediate.

The protein belongs to the NDK family. The cofactor is Mg(2+).

The enzyme catalyses a 2'-deoxyribonucleoside 5'-diphosphate + ATP = a 2'-deoxyribonucleoside 5'-triphosphate + ADP. It carries out the reaction a ribonucleoside 5'-diphosphate + ATP = a ribonucleoside 5'-triphosphate + ADP. Major role in the synthesis of nucleoside triphosphates other than ATP. The ATP gamma phosphate is transferred to the NDP beta phosphate via a ping-pong mechanism, using a phosphorylated active-site intermediate. This chain is Putative nucleoside diphosphate kinase (NME2P1), found in Homo sapiens (Human).